Here is a 393-residue protein sequence, read N- to C-terminus: uncharacterized protein (393 aa).

A TRAM domain is found at 12-70 (APLLGSKIKLNIEKLAIGGAGVARHEGMVVFVPQAAPNEEILAEITLVKKNFMEARVVE). [4Fe-4S] cluster-binding residues include cysteine 83, cysteine 89, cysteine 92, and cysteine 166. S-adenosyl-L-methionine is bound by residues glutamine 221, tyrosine 250, glutamate 273, and aspartate 316. Cysteine 343 (nucleophile) is an active-site residue.

It belongs to the class I-like SAM-binding methyltransferase superfamily. RNA M5U methyltransferase family.

This is an uncharacterized protein from Bdellovibrio bacteriovorus (strain ATCC 15356 / DSM 50701 / NCIMB 9529 / HD100).